Here is a 199-residue protein sequence, read N- to C-terminus: Pyridoxal 5'-phosphate synthase subunit PdxT (199 aa).

Residue 47 to 49 participates in L-glutamine binding; sequence GES. Residue Cys79 is the Nucleophile of the active site. L-glutamine contacts are provided by residues Arg106 and 133 to 134; that span reads IR. Catalysis depends on charge relay system residues His169 and Glu171.

It belongs to the glutaminase PdxT/SNO family. As to quaternary structure, in the presence of PdxS, forms a dodecamer of heterodimers. Only shows activity in the heterodimer.

It catalyses the reaction aldehydo-D-ribose 5-phosphate + D-glyceraldehyde 3-phosphate + L-glutamine = pyridoxal 5'-phosphate + L-glutamate + phosphate + 3 H2O + H(+). The enzyme catalyses L-glutamine + H2O = L-glutamate + NH4(+). It functions in the pathway cofactor biosynthesis; pyridoxal 5'-phosphate biosynthesis. Its function is as follows. Catalyzes the hydrolysis of glutamine to glutamate and ammonia as part of the biosynthesis of pyridoxal 5'-phosphate. The resulting ammonia molecule is channeled to the active site of PdxS. In Desulfitobacterium hafniense (strain DSM 10664 / DCB-2), this protein is Pyridoxal 5'-phosphate synthase subunit PdxT.